Reading from the N-terminus, the 353-residue chain is Phospho-N-acetylmuramoyl-pentapeptide-transferase (353 aa).

The next 10 helical transmembrane spans lie at 22 to 42 (FAFF…ITWA), 65 to 85 (TPTM…LFCI), 88 to 108 (DNIF…IGLI), 129 to 149 (LLAQ…SSEL), 161 to 181 (PLFD…ISSS), 192 to 212 (GLAT…LYLS), 228 to 248 (GLGE…GFLW), 256 to 276 (VFMG…LAVI), 281 to 301 (ILLL…ILQV), and 330 to 350 (KIIV…LASI).

Belongs to the glycosyltransferase 4 family. MraY subfamily. The cofactor is Mg(2+).

The protein resides in the cell inner membrane. It catalyses the reaction UDP-N-acetyl-alpha-D-muramoyl-L-alanyl-gamma-D-glutamyl-meso-2,6-diaminopimeloyl-D-alanyl-D-alanine + di-trans,octa-cis-undecaprenyl phosphate = di-trans,octa-cis-undecaprenyl diphospho-N-acetyl-alpha-D-muramoyl-L-alanyl-D-glutamyl-meso-2,6-diaminopimeloyl-D-alanyl-D-alanine + UMP. It functions in the pathway cell wall biogenesis; peptidoglycan biosynthesis. Functionally, catalyzes the initial step of the lipid cycle reactions in the biosynthesis of the cell wall peptidoglycan: transfers peptidoglycan precursor phospho-MurNAc-pentapeptide from UDP-MurNAc-pentapeptide onto the lipid carrier undecaprenyl phosphate, yielding undecaprenyl-pyrophosphoryl-MurNAc-pentapeptide, known as lipid I. This chain is Phospho-N-acetylmuramoyl-pentapeptide-transferase, found in Campylobacter jejuni subsp. jejuni serotype O:2 (strain ATCC 700819 / NCTC 11168).